A 341-amino-acid chain; its full sequence is L-amino acid-D/L-Glu epimerase (341 aa).

Residues threonine 132 and 157 to 159 each bind substrate; that span reads KIK. Residues aspartate 186, glutamate 212, and aspartate 237 each coordinate Mg(2+). Substrate-binding positions include lysine 261 and 315–317; that span reads DLD.

The protein belongs to the mandelate racemase/muconate lactonizing enzyme family. Mg(2+) is required as a cofactor.

In terms of biological role, catalyzes the epimerization of dipeptides with L-Glu in the second position. Has epimerase activity with L-Gly-L-Glu, L-Ala-L-Glu, L-Ser-L-Glu, L-Pro-L-Glu, L-Val-L-Glu, L-Met-L-Glu, L-Thr-L-Glu and L-Phe-L-Glu (in vitro). This is L-amino acid-D/L-Glu epimerase from Sulfurimonas denitrificans (strain ATCC 33889 / DSM 1251) (Thiomicrospira denitrificans (strain ATCC 33889 / DSM 1251)).